A 215-amino-acid chain; its full sequence is UPF0502 protein Gbem_0102 (215 aa).

Belongs to the UPF0502 family.

This chain is UPF0502 protein Gbem_0102, found in Citrifermentans bemidjiense (strain ATCC BAA-1014 / DSM 16622 / JCM 12645 / Bem) (Geobacter bemidjiensis).